We begin with the raw amino-acid sequence, 182 residues long: Adenine phosphoribosyltransferase (182 aa).

It belongs to the purine/pyrimidine phosphoribosyltransferase family. Homodimer.

Its subcellular location is the cytoplasm. The enzyme catalyses AMP + diphosphate = 5-phospho-alpha-D-ribose 1-diphosphate + adenine. It functions in the pathway purine metabolism; AMP biosynthesis via salvage pathway; AMP from adenine: step 1/1. Its function is as follows. Catalyzes a salvage reaction resulting in the formation of AMP, that is energically less costly than de novo synthesis. This chain is Adenine phosphoribosyltransferase, found in Pseudomonas entomophila (strain L48).